Consider the following 318-residue polypeptide: Aldehyde oxidoreductase FAD-binding subunit PaoB (318 aa).

Positions 1-223 constitute an FAD-binding PCMH-type domain; it reads MKAFTYERVN…VAVTLPPPLG (223 aa). FAD contacts are provided by residues 26-34 and Thr108; that span reads KFIAGGTNL. [4Fe-4S] cluster is bound by residues Cys119, Cys129, Cys138, and Cys157. Residues Asp164, Ile213, and Lys230 each contribute to the FAD site.

As to quaternary structure, heterotrimer composed of PaoA, PaoB and PaoC. Requires FAD as cofactor. [4Fe-4S] cluster serves as cofactor.

The protein localises to the periplasm. It catalyses the reaction an aldehyde + A + H2O = a carboxylate + AH2 + H(+). With respect to regulation, the complex requires PaoD for activity. Its function is as follows. Oxidizes aldehydes to the corresponding carboxylic acids with a preference for aromatic aldehydes. It might play a role in the detoxification of aldehydes to avoid cell damage. The chain is Aldehyde oxidoreductase FAD-binding subunit PaoB from Escherichia coli (strain K12).